A 1045-amino-acid chain; its full sequence is DNA polymerase (1045 aa).

The segment at 331–355 (IKENEESDSESDNDDEEDKKENDGA) is disordered. Positions 335–348 (EESDSESDNDDEED) are enriched in acidic residues.

This sequence belongs to the DNA polymerase type-B family.

It catalyses the reaction DNA(n) + a 2'-deoxyribonucleoside 5'-triphosphate = DNA(n+1) + diphosphate. This is DNA polymerase (dpo) from Phaeocystis pouchetii (PpV01).